We begin with the raw amino-acid sequence, 106 residues long: ATP-dependent Clp protease adapter protein ClpS (106 aa).

A compositionally biased stretch (polar residues) spans methionine 1–leucine 13. The tract at residues methionine 1–lysine 21 is disordered.

This sequence belongs to the ClpS family. Binds to the N-terminal domain of the chaperone ClpA.

In terms of biological role, involved in the modulation of the specificity of the ClpAP-mediated ATP-dependent protein degradation. This is ATP-dependent Clp protease adapter protein ClpS from Pectobacterium carotovorum subsp. carotovorum (strain PC1).